Consider the following 1217-residue polypeptide: ATP-dependent helicase/nuclease subunit A (1217 aa).

The UvrD-like helicase ATP-binding domain maps to Val10–Arg475. Ala31–Thr38 provides a ligand contact to ATP. Positions Lys476–Gly786 constitute a UvrD-like helicase C-terminal domain.

This sequence belongs to the helicase family. AddA subfamily. Heterodimer of AddA and AddB/RexB. Mg(2+) is required as a cofactor.

The catalysed reaction is Couples ATP hydrolysis with the unwinding of duplex DNA by translocating in the 3'-5' direction.. It catalyses the reaction ATP + H2O = ADP + phosphate + H(+). In terms of biological role, the heterodimer acts as both an ATP-dependent DNA helicase and an ATP-dependent, dual-direction single-stranded exonuclease. Recognizes the chi site generating a DNA molecule suitable for the initiation of homologous recombination. The AddA nuclease domain is required for chi fragment generation; this subunit has the helicase and 3' -&gt; 5' nuclease activities. The sequence is that of ATP-dependent helicase/nuclease subunit A from Staphylococcus aureus (strain MSSA476).